Consider the following 154-residue polypeptide: UPF0225 protein YPDSF_0962 (154 aa).

It belongs to the UPF0225 family.

This Yersinia pestis (strain Pestoides F) protein is UPF0225 protein YPDSF_0962.